The following is a 52-amino-acid chain: ATP synthase F(1) complex subunit epsilon, mitochondrial (52 aa).

An N6-acetyllysine; alternate mark is found at Lys-21, Lys-32, and Lys-37. Residues Lys-21, Lys-32, and Lys-37 each carry the N6-succinyllysine; alternate modification. Lys-44 is modified (N6-acetyllysine).

This sequence belongs to the eukaryotic ATPase epsilon family. Component of the ATP synthase complex composed at least of ATP5F1A/subunit alpha, ATP5F1B/subunit beta, ATP5MC1/subunit c (homooctomer), MT-ATP6/subunit a, MT-ATP8/subunit 8, ATP5ME/subunit e, ATP5MF/subunit f, ATP5MG/subunit g, ATP5MK/subunit k, ATP5MJ/subunit j, ATP5F1C/subunit gamma, ATP5F1D/subunit delta, ATP5F1E/subunit epsilon, ATP5PF/subunit F6, ATP5PB/subunit b, ATP5PD/subunit d, ATP5PO/subunit OSCP. ATP synthase complex consists of a soluble F(1) head domain (subunits alpha(3) and beta(3)) - the catalytic core - and a membrane F(0) domain - the membrane proton channel (subunits c, a, 8, e, f, g, k and j). These two domains are linked by a central stalk (subunits gamma, delta, and epsilon) rotating inside the F1 region and a stationary peripheral stalk (subunits F6, b, d, and OSCP).

It localises to the mitochondrion. The protein resides in the mitochondrion inner membrane. Subunit epsilon, of the mitochondrial membrane ATP synthase complex (F(1)F(0) ATP synthase or Complex V) that produces ATP from ADP in the presence of a proton gradient across the membrane which is generated by electron transport complexes of the respiratory chain. ATP synthase complex consist of a soluble F(1) head domain - the catalytic core - and a membrane F(1) domain - the membrane proton channel. These two domains are linked by a central stalk rotating inside the F(1) region and a stationary peripheral stalk. During catalysis, ATP synthesis in the catalytic domain of F(1) is coupled via a rotary mechanism of the central stalk subunits to proton translocation. In vivo, can only synthesize ATP although its ATP hydrolase activity can be activated artificially in vitro. May be essential for the assembly of F(1) and may play an important role in the incorporation of the hydrophobic subunit c into the F(1)-c oligomer rotor of the mitochondrial ATP synthase complex. The chain is ATP synthase F(1) complex subunit epsilon, mitochondrial from Mus musculus (Mouse).